We begin with the raw amino-acid sequence, 180 residues long: Iron sulfur cluster assembly protein 1, mitochondrial (180 aa).

This sequence belongs to the NifU family. Component of the core Fe-S cluster (ISC) assembly machinery. Requires [2Fe-2S] cluster as cofactor.

It localises to the mitochondrion matrix. Its pathway is cofactor biosynthesis; iron-sulfur cluster biosynthesis. Scaffold protein for the de novo synthesis of iron-sulfur (Fe-S) clusters within mitochondria, which is required for maturation of both mitochondrial and cytoplasmic [2Fe-2S] and [4Fe-4S] proteins. First, a [2Fe-2S] cluster is transiently assembled on the scaffold protein ISU1. In a second step, the cluster is released from ISU1, transferred to a glutaredoxin, followed by the formation of mitochondrial [2Fe-2S] proteins, the synthesis of [4Fe-4S] clusters and their target-specific insertion into the recipient apoproteins. Cluster assembly on ISU1 depends on the function of the cysteine desulfurase complex NFS1-ISD11, which serves as the sulfur donor for cluster synthesis, the iron-binding protein frataxin as the putative iron donor, and the electron transfer chain comprised of ferredoxin reductase and ferredoxin, which receive their electrons from NADH. The polypeptide is Iron sulfur cluster assembly protein 1, mitochondrial (ISU1) (Kluyveromyces lactis (strain ATCC 8585 / CBS 2359 / DSM 70799 / NBRC 1267 / NRRL Y-1140 / WM37) (Yeast)).